The sequence spans 286 residues: MISSKTSFIALIGNPVSHSLSPIMQNAALQYLGLDLIYIAIPCKDEDLELVLNSLKKINCKGLNITIPHKEKVFNLCSEISSIASKLKAINTLRLNSEKEWSGTNTDVEGFIYPLKNLNLTKKKSIVLGSGGAARSVIQGLINLNLSKISVISRNKSSVEELIKDFGNQIQLQGLLNTNNEVQNLIEEANLVVNTTPVGMKTAKHEMNVLPYGESFWRSLNSKTIVYDLIYNPAPTHLLKFSANKGCRTIDGLQMLVAQGLKSLSFWTNGLEVPFHIMNDALKNHL.

Residues 19 to 21 (SLS) and Thr-66 contribute to the shikimate site. Lys-70 acts as the Proton acceptor in catalysis. Residues Asn-91 and Asp-107 each contribute to the shikimate site. Residues 129-133 (GSGGA) and Leu-229 contribute to the NADP(+) site. Residue Tyr-231 participates in shikimate binding. Gly-252 serves as a coordination point for NADP(+).

Belongs to the shikimate dehydrogenase family. As to quaternary structure, homodimer.

It carries out the reaction shikimate + NADP(+) = 3-dehydroshikimate + NADPH + H(+). The protein operates within metabolic intermediate biosynthesis; chorismate biosynthesis; chorismate from D-erythrose 4-phosphate and phosphoenolpyruvate: step 4/7. Involved in the biosynthesis of the chorismate, which leads to the biosynthesis of aromatic amino acids. Catalyzes the reversible NADPH linked reduction of 3-dehydroshikimate (DHSA) to yield shikimate (SA). The sequence is that of Shikimate dehydrogenase (NADP(+)) from Prochlorococcus marinus (strain MIT 9215).